Consider the following 508-residue polypeptide: Cobyric acid synthase (508 aa).

Positions 249–451 (EVDVAIINLP…IHGIFENSLF (203 aa)) constitute a GATase cobBQ-type domain. The Nucleophile role is filled by Cys-330. His-443 is a catalytic residue.

It belongs to the CobB/CobQ family. CobQ subfamily.

It functions in the pathway cofactor biosynthesis; adenosylcobalamin biosynthesis. Catalyzes amidations at positions B, D, E, and G on adenosylcobyrinic A,C-diamide. NH(2) groups are provided by glutamine, and one molecule of ATP is hydrogenolyzed for each amidation. The polypeptide is Cobyric acid synthase (Caldanaerobacter subterraneus subsp. tengcongensis (strain DSM 15242 / JCM 11007 / NBRC 100824 / MB4) (Thermoanaerobacter tengcongensis)).